The following is a 313-amino-acid chain: Olfactory receptor 8B2 (313 aa).

The Extracellular segment spans residues 1–25 (MLARNNSLVTEFILAGLTDHPEFRQ). N-linked (GlcNAc...) asparagine glycosylation occurs at N5. Residues 26–46 (PLFFLFLVIYIVTMVGNLGLI) traverse the membrane as a helical segment. Residues 47–54 (TLFGLNSH) lie on the Cytoplasmic side of the membrane. The helical transmembrane segment at 55-75 (LHTPMYYFLFNLSFIDLCYSS) threads the bilayer. Residues 76–99 (VFTPKMLMNFVSKKNIISNVGCMT) lie on the Extracellular side of the membrane. The cysteines at positions 97 and 189 are disulfide-linked. The helical transmembrane segment at 100 to 120 (RLFFFLFFVISECYMLTSMAY) threads the bilayer. Over 121 to 139 (DRYVAICNPLLYKVTMSHQ) the chain is Cytoplasmic. A helical transmembrane segment spans residues 140-160 (VCSMLTFAAYIMGLAGATAHT). At 161-197 (GCMLRLTFCSANIINHYLCDILPLLQLSCTSTYVNEV) the chain is on the extracellular side. Residues 198-217 (VVLIVVGTNITVPSCTILIS) form a helical membrane-spanning segment. At 218 to 237 (YVFIVTSILHIKSTQGRSKA) the chain is on the cytoplasmic side. Residues 238–258 (FSTCSSHVIALSLFFGSAAFM) traverse the membrane as a helical segment. At 259-270 (YIKYSSGSMEQG) the chain is on the extracellular side. Residues 271 to 291 (KVSSVFYTNVVPMLNPLIYSL) form a helical membrane-spanning segment. The Cytoplasmic portion of the chain corresponds to 292-313 (RNKDVKVALRKALIKIQRRNIF).

The protein belongs to the G-protein coupled receptor 1 family.

Its subcellular location is the cell membrane. Odorant receptor. This is Olfactory receptor 8B2 (OR8B2) from Homo sapiens (Human).